The following is a 155-amino-acid chain: Interferon gamma (155 aa).

The signal sequence occupies residues Met1 to Cys22. 2 N-linked (GlcNAc...) asparagine glycosylation sites follow: Asn38 and Asn90.

This sequence belongs to the type II (or gamma) interferon family. As to quaternary structure, homodimer. Interacts with IFNGR1 (via extracellular domain); this interaction promotes IFNGR1 dimerization. Released primarily from activated T lymphocytes.

The protein localises to the secreted. Functionally, type II interferon produced by immune cells such as T-cells and NK cells that plays crucial roles in antimicrobial, antiviral, and antitumor responses by activating effector immune cells and enhancing antigen presentation. Primarily signals through the JAK-STAT pathway after interaction with its receptor IFNGR1 to affect gene regulation. Upon IFNG binding, IFNGR1 intracellular domain opens out to allow association of downstream signaling components JAK2, JAK1 and STAT1, leading to STAT1 activation, nuclear translocation and transcription of IFNG-regulated genes. Many of the induced genes are transcription factors such as IRF1 that are able to further drive regulation of a next wave of transcription. Plays a role in class I antigen presentation pathway by inducing a replacement of catalytic proteasome subunits with immunoproteasome subunits. In turn, increases the quantity, quality, and repertoire of peptides for class I MHC loading. Increases the efficiency of peptide generation also by inducing the expression of activator PA28 that associates with the proteasome and alters its proteolytic cleavage preference. Up-regulates as well MHC II complexes on the cell surface by promoting expression of several key molecules such as cathepsins B/CTSB, H/CTSH, and L/CTSL. Participates in the regulation of hematopoietic stem cells during development and under homeostatic conditions by affecting their development, quiescence, and differentiation. In Mus musculus (Mouse), this protein is Interferon gamma (Ifng).